We begin with the raw amino-acid sequence, 192 residues long: Fe/S biogenesis protein NfuA (192 aa).

Positions 149 and 152 each coordinate [4Fe-4S] cluster.

The protein belongs to the NfuA family. As to quaternary structure, homodimer. [4Fe-4S] cluster is required as a cofactor.

Involved in iron-sulfur cluster biogenesis. Binds a 4Fe-4S cluster, can transfer this cluster to apoproteins, and thereby intervenes in the maturation of Fe/S proteins. Could also act as a scaffold/chaperone for damaged Fe/S proteins. The protein is Fe/S biogenesis protein NfuA of Shewanella denitrificans (strain OS217 / ATCC BAA-1090 / DSM 15013).